The chain runs to 240 residues: MVELDPNNIPQHVAIIMDGNGRWAQQKGKMRIFGHKNGVKAVREAVSYARKVGIKVLTLYAFSSENWNRPKKEVNALMALFMQALDLEVKKLHKNNIKLNILGDVTGFSASLQNKIHQAEKLTENNTALTLNIAANYGGCWDIVQATKSLAQQVKEGKLAVDEINAQVLQQALVTKEQPQVDLLIRTSGEQRISNFLLWQIAYAELYFSDVLWPDFNEKEFNEAIIAYQQRHRRFGGAEE.

Residue Asp-18 is part of the active site. Residue Asp-18 coordinates Mg(2+). Residues 19 to 22 (GNGR), Trp-23, Arg-31, His-35, and 63 to 65 (SSE) each bind substrate. Catalysis depends on Asn-66, which acts as the Proton acceptor. Substrate is bound by residues Trp-67, Arg-69, Arg-186, and 192–194 (RIS). Mg(2+) is bound at residue Glu-205.

It belongs to the UPP synthase family. In terms of assembly, homodimer. The cofactor is Mg(2+).

It carries out the reaction 8 isopentenyl diphosphate + (2E,6E)-farnesyl diphosphate = di-trans,octa-cis-undecaprenyl diphosphate + 8 diphosphate. Catalyzes the sequential condensation of isopentenyl diphosphate (IPP) with (2E,6E)-farnesyl diphosphate (E,E-FPP) to yield (2Z,6Z,10Z,14Z,18Z,22Z,26Z,30Z,34E,38E)-undecaprenyl diphosphate (di-trans,octa-cis-UPP). UPP is the precursor of glycosyl carrier lipid in the biosynthesis of bacterial cell wall polysaccharide components such as peptidoglycan and lipopolysaccharide. This is Ditrans,polycis-undecaprenyl-diphosphate synthase ((2E,6E)-farnesyl-diphosphate specific) from Pasteurella multocida (strain Pm70).